The primary structure comprises 1132 residues: Telomerase reverse transcriptase (1132 aa).

Residues methionine 1–asparagine 66 form a disordered region. Polar residues-rich tracts occupy residues serine 9–threonine 26 and glutamine 45–arginine 55. The Reverse transcriptase domain occupies lysine 602–isoleucine 956. Residues aspartate 708, aspartate 886, and aspartate 887 each coordinate Mg(2+).

It belongs to the reverse transcriptase family. Telomerase subfamily.

Its subcellular location is the nucleus. The protein resides in the chromosome. It is found in the telomere. It carries out the reaction DNA(n) + a 2'-deoxyribonucleoside 5'-triphosphate = DNA(n+1) + diphosphate. Telomerase is a ribonucleoprotein enzyme essential for the replication of chromosome termini in most eukaryotes. It elongates telomeres. It is a reverse transcriptase that adds simple sequence repeats to chromosome ends by copying a template sequence within the RNA component of the enzyme. This Oxytricha trifallax (Sterkiella histriomuscorum) protein is Telomerase reverse transcriptase (TERT).